We begin with the raw amino-acid sequence, 214 residues long: Adenylate kinase (214 aa).

10–15 (GAGKGT) contributes to the ATP binding site. An NMP region spans residues 30–59 (ATGDVLRAAVKEGTPLGLEAKAAMDRGDLV). Residues Thr31, Arg36, 57–59 (DLV), and Gln92 contribute to the AMP site. Positions 126-161 (GRTTCEACQRPFFGRQPGETCTEGGVSGTLVRRKDD) are LID. Arg127 contacts ATP. Arg158 and Arg169 together coordinate AMP. Gly198 serves as a coordination point for ATP.

The protein belongs to the adenylate kinase family. In terms of assembly, monomer.

It localises to the cytoplasm. The catalysed reaction is AMP + ATP = 2 ADP. The protein operates within purine metabolism; AMP biosynthesis via salvage pathway; AMP from ADP: step 1/1. In terms of biological role, catalyzes the reversible transfer of the terminal phosphate group between ATP and AMP. Plays an important role in cellular energy homeostasis and in adenine nucleotide metabolism. In Gemmatimonas aurantiaca (strain DSM 14586 / JCM 11422 / NBRC 100505 / T-27), this protein is Adenylate kinase.